The primary structure comprises 455 residues: Lysine histidine transporter-like 4 (455 aa).

The Cytoplasmic segment spans residues M1–Y38. A helical transmembrane segment spans residues S39–M59. Residues S60–E61 are Extracellular-facing. Residues L62 to L82 traverse the membrane as a helical segment. Over W83–G113 the chain is Cytoplasmic. Residues L114–V134 form a helical membrane-spanning segment. The Extracellular portion of the chain corresponds to T135–R158. The helical transmembrane segment at I159–F179 threads the bilayer. Residues N180 to S181 lie on the Cytoplasmic side of the membrane. Residues I182–V202 form a helical membrane-spanning segment. Topologically, residues A203–P226 are extracellular. The chain crosses the membrane as a helical span at residues L227 to L247. Residues E248–K267 are Cytoplasmic-facing. A helical membrane pass occupies residues G268–F288. The Extracellular segment spans residues K289–T307. The chain crosses the membrane as a helical span at residues A308–Y328. The Cytoplasmic portion of the chain corresponds to A329–R357. A helical membrane pass occupies residues W358 to L378. Residue S379 is a topological domain, extracellular. The chain crosses the membrane as a helical span at residues F380–I400. Over L401–C412 the chain is Cytoplasmic. A helical membrane pass occupies residues M413 to L433. Over A434 to H455 the chain is Extracellular.

It belongs to the amino acid/polyamine transporter 2 family. Amino acid/auxin permease (AAAP) (TC 2.A.18.2) subfamily.

It is found in the cell membrane. Amino acid transporter. In Arabidopsis thaliana (Mouse-ear cress), this protein is Lysine histidine transporter-like 4.